A 416-amino-acid chain; its full sequence is Glutamyl-tRNA reductase (416 aa).

Residues 49–52 (TCNR), Ser-105, 110–112 (EPQ), and Gln-116 contribute to the substrate site. The active-site Nucleophile is the Cys-50. 185–190 (GAGETI) serves as a coordination point for NADP(+).

Belongs to the glutamyl-tRNA reductase family. In terms of assembly, homodimer.

It catalyses the reaction (S)-4-amino-5-oxopentanoate + tRNA(Glu) + NADP(+) = L-glutamyl-tRNA(Glu) + NADPH + H(+). The protein operates within porphyrin-containing compound metabolism; protoporphyrin-IX biosynthesis; 5-aminolevulinate from L-glutamyl-tRNA(Glu): step 1/2. Catalyzes the NADPH-dependent reduction of glutamyl-tRNA(Glu) to glutamate 1-semialdehyde (GSA). This chain is Glutamyl-tRNA reductase, found in Shewanella frigidimarina (strain NCIMB 400).